A 429-amino-acid chain; its full sequence is D-amino acid dehydrogenase (429 aa).

An FAD-binding site is contributed by 3–17 (VLILGSGVIGVTSAW).

The protein belongs to the DadA oxidoreductase family. FAD is required as a cofactor.

It carries out the reaction a D-alpha-amino acid + A + H2O = a 2-oxocarboxylate + AH2 + NH4(+). The protein operates within amino-acid degradation; D-alanine degradation; NH(3) and pyruvate from D-alanine: step 1/1. Its function is as follows. Oxidative deamination of D-amino acids. The sequence is that of D-amino acid dehydrogenase from Xanthomonas euvesicatoria pv. vesicatoria (strain 85-10) (Xanthomonas campestris pv. vesicatoria).